Consider the following 208-residue polypeptide: Guanylate kinase (208 aa).

In terms of domain architecture, Guanylate kinase-like spans 21–201; the sequence is GRVVVLSGPS…ACAELVSLLV (181 aa). 28 to 35 lines the ATP pocket; the sequence is GPSAVGKS.

It belongs to the guanylate kinase family.

It localises to the cytoplasm. The catalysed reaction is GMP + ATP = GDP + ADP. Its function is as follows. Essential for recycling GMP and indirectly, cGMP. The protein is Guanylate kinase (gmk) of Mycobacterium bovis (strain ATCC BAA-935 / AF2122/97).